Here is a 449-residue protein sequence, read N- to C-terminus: Agmatine hydroxycinnamoyltransferase 1 (449 aa).

Catalysis depends on proton acceptor residues His153 and Asp392.

Belongs to the plant acyltransferase family. As to expression, highly expressed in roots. Expressed at low levels in flowers.

Its function is as follows. Hydroxycinnamoyl transferase that catalyzes the transfer of an acyl from p-coumaryol-CoA to agmatine, to produce coumaroyl agmatine. Can use feruloyl-CoA, caffeoyl-CoA and sinapoyl-CoA as acyl donors. Seems to be able to transfer the acyl group from p-coumaroyl-CoA and feruloyl-CoA to the acyl acceptors putrescine and spermidine. This chain is Agmatine hydroxycinnamoyltransferase 1, found in Oryza sativa subsp. japonica (Rice).